Here is a 401-residue protein sequence, read N- to C-terminus: Tryptophan synthase beta chain (401 aa).

Lys-92 is modified (N6-(pyridoxal phosphate)lysine).

Belongs to the TrpB family. Tetramer of two alpha and two beta chains. Pyridoxal 5'-phosphate is required as a cofactor.

The catalysed reaction is (1S,2R)-1-C-(indol-3-yl)glycerol 3-phosphate + L-serine = D-glyceraldehyde 3-phosphate + L-tryptophan + H2O. The protein operates within amino-acid biosynthesis; L-tryptophan biosynthesis; L-tryptophan from chorismate: step 5/5. In terms of biological role, the beta subunit is responsible for the synthesis of L-tryptophan from indole and L-serine. The polypeptide is Tryptophan synthase beta chain (Vesicomyosocius okutanii subsp. Calyptogena okutanii (strain HA)).